A 163-amino-acid chain; its full sequence is Large ribosomal subunit protein uL10 (163 aa).

The protein belongs to the universal ribosomal protein uL10 family. In terms of assembly, part of the ribosomal stalk of the 50S ribosomal subunit. The N-terminus interacts with L11 and the large rRNA to form the base of the stalk. The C-terminus forms an elongated spine to which L12 dimers bind in a sequential fashion forming a multimeric L10(L12)X complex.

Its function is as follows. Forms part of the ribosomal stalk, playing a central role in the interaction of the ribosome with GTP-bound translation factors. The protein is Large ribosomal subunit protein uL10 of Haemophilus influenzae (strain 86-028NP).